The chain runs to 919 residues: TRPM8 channel-associated factor 2 (919 aa).

One can recognise a Peptidase M60 domain in the interval 543 to 842 (DVWMSTGLYL…TYLQLQEVFG (300 aa)).

Belongs to the TCAF family. In terms of assembly, interacts with TRPM8 (via N-terminus and C-terminus domains); the interaction inhibits TRPM8 channel activity. Interacts with TRPV6.

The protein localises to the cell membrane. In terms of biological role, negatively regulates the plasma membrane cation channel TRPM8 activity. Involved in the recruitment of TRPM8 to the cell surface. Promotes prostate cancer cell migration stimulation in a TRPM8-dependent manner. The polypeptide is TRPM8 channel-associated factor 2 (Mus musculus (Mouse)).